Reading from the N-terminus, the 296-residue chain is Diguanylate cyclase DgcS (296 aa).

The region spanning 165-293 (GSVSLIVLDL…GRNCYKLSPT (129 aa)) is the GGDEF domain. 3 residues coordinate Mg(2+): Asp-173, Leu-174, and Asp-216. The active site involves Asp-216.

Mg(2+) is required as a cofactor.

The catalysed reaction is 2 GTP = 3',3'-c-di-GMP + 2 diphosphate. In terms of biological role, catalyzes the synthesis of cyclic-di-GMP (c-di-GMP) via the condensation of 2 GTP molecules. May be involved in the regulation of formation of solid surface-associated biofilms and pellicles according to environmental conditions. In Shewanella oneidensis (strain ATCC 700550 / JCM 31522 / CIP 106686 / LMG 19005 / NCIMB 14063 / MR-1), this protein is Diguanylate cyclase DgcS.